A 449-amino-acid chain; its full sequence is UDP-N-acetylmuramoylalanine--D-glutamate ligase (449 aa).

118–124 (GTNGKTT) serves as a coordination point for ATP.

It belongs to the MurCDEF family.

The protein localises to the cytoplasm. It catalyses the reaction UDP-N-acetyl-alpha-D-muramoyl-L-alanine + D-glutamate + ATP = UDP-N-acetyl-alpha-D-muramoyl-L-alanyl-D-glutamate + ADP + phosphate + H(+). It participates in cell wall biogenesis; peptidoglycan biosynthesis. Cell wall formation. Catalyzes the addition of glutamate to the nucleotide precursor UDP-N-acetylmuramoyl-L-alanine (UMA). This chain is UDP-N-acetylmuramoylalanine--D-glutamate ligase, found in Staphylococcus saprophyticus subsp. saprophyticus (strain ATCC 15305 / DSM 20229 / NCIMB 8711 / NCTC 7292 / S-41).